A 500-amino-acid polypeptide reads, in one-letter code: Putative DNA recombinase (500 aa).

The Resolvase/invertase-type recombinase catalytic domain maps to 1 to 144; the sequence is MIAIYVRVST…SGRLQKMKKG (144 aa). The active-site O-(5'-phospho-DNA)-serine intermediate is S9. The recombinase DNA-binding region spans 152 to 288; that stretch reads LYGYKFVKEK…QELLGQSKRK (137 aa). A coiled-coil region spans residues 372-448; it reads KEAEQSNHLS…IQSKMKVLDD (77 aa).

It in the N-terminal section; belongs to the site-specific recombinase resolvase family.

In terms of biological role, putative site-specific recombinase having a very important role in sporulation. It probably plays a role in the recombination of SpoIIIC and SpoIVCB to form sigma K factor. The polypeptide is Putative DNA recombinase (cisA) (Bacillus subtilis (strain 168)).